Consider the following 97-residue polypeptide: Plastocyanin (97 aa).

Residues 1-97 (AEVKLGADDG…AGMKGEVTVT (97 aa)) enclose the Plastocyanin-like domain. Residues H37, C82, H85, and M90 each contribute to the Cu cation site.

Belongs to the plastocyanin family. The cofactor is Cu(2+).

Its subcellular location is the plastid. The protein resides in the chloroplast thylakoid membrane. Its function is as follows. Participates in electron transfer between P700 and the cytochrome b6-f complex in photosystem I. This Daucus carota (Wild carrot) protein is Plastocyanin (PETE).